A 153-amino-acid chain; its full sequence is UPF0743 protein YCR087C-A (153 aa).

C2HC LYAR-type zinc fingers lie at residues 1–26 (MVTF…YRCP) and 27–52 (NAYY…TSCI). C6, C9, H21, C25, C32, C35, H48, and C51 together coordinate Zn(2+). The disordered stretch occupies residues 63-96 (YKGNKKQKQKQQQKQQQKQHQHQPVATPAKKVEK). Residues 65–83 (GNKKQKQKQQQKQQQKQHQ) show a composition bias toward basic residues.

Belongs to the UPF0743 family.

The protein localises to the nucleus. The protein resides in the nucleolus. In Saccharomyces cerevisiae (strain ATCC 204508 / S288c) (Baker's yeast), this protein is UPF0743 protein YCR087C-A.